Reading from the N-terminus, the 359-residue chain is Alkanal monooxygenase alpha chain (359 aa).

It belongs to the bacterial luciferase oxidoreductase family. Heterodimer of an alpha and a beta chain.

The enzyme catalyses a long-chain fatty aldehyde + FMNH2 + O2 = a long-chain fatty acid + hnu + FMN + H2O + 2 H(+). Light-emitting reaction in luminous bacteria. The chain is Alkanal monooxygenase alpha chain (luxA) from Photorhabdus laumondii subsp. laumondii (strain DSM 15139 / CIP 105565 / TT01) (Photorhabdus luminescens subsp. laumondii).